The primary structure comprises 510 residues: Indoleacetate--CoA ligase (510 aa).

This sequence belongs to the ATP-dependent AMP-binding enzyme family. As to quaternary structure, monomer.

The catalysed reaction is (indol-3-yl)acetate + ATP + CoA = (indol-3-yl)acetyl-CoA + AMP + diphosphate. It catalyses the reaction (indol-3-yl)acetate + ATP + H(+) = (indol-3-yl)acetyl-AMP + diphosphate. It carries out the reaction (indol-3-yl)acetyl-AMP + CoA = (indol-3-yl)acetyl-CoA + AMP + H(+). With respect to regulation, inhibited by high concentrations of substrates, and by the synthetic auxin compound 2,4-dichlorophenoxyacetate (2,4-D), which does not serve as substrate. Involved in degradation of indoleacetate, the most common member of the auxin class of plant hormones. Highly specific indoleacetate-CoA ligase which catalyzes the ATP-dependent activation of indoleacetate (IAA) to indoleacetyl-CoA. Also activates some closely related compounds such as the non-physiological compound (2-naphthyl)acetate and phenylacetate, which seems to be a fortuitous substrate for IaaB. In Aromatoleum aromaticum (strain DSM 19018 / LMG 30748 / EbN1) (Azoarcus sp. (strain EbN1)), this protein is Indoleacetate--CoA ligase.